A 1357-amino-acid chain; its full sequence is Major yolk protein (1357 aa).

A signal peptide spans 1–15; it reads MRAAILFCLVASSMA. Transferrin-like domains lie at 132-478 and 493-1101; these read VRWC…GEVY and AKIC…AIVK. 22 N-linked (GlcNAc...) asparagine glycosylation sites follow: Asn198, Asn227, Asn304, Asn310, Asn402, Asn499, Asn530, Asn541, Asn572, Asn578, Asn625, Asn639, Asn692, Asn732, Asn741, Asn1035, Asn1043, Asn1081, Asn1128, Asn1208, Asn1241, and Asn1258.

It belongs to the transferrin family. In terms of tissue distribution, synthesized in the intestines of the females and males and also in ovaries and testis.

The protein resides in the secreted. In terms of biological role, may serve the following two functions: a classical role as a yolk protein precursor and probably shuttle iron to developing germ cells. The protein is Major yolk protein of Strongylocentrotus purpuratus (Purple sea urchin).